Here is an 86-residue protein sequence, read N- to C-terminus: Exodeoxyribonuclease 7 small subunit (86 aa).

Positions Met-1–Phe-27 are disordered.

It belongs to the XseB family. As to quaternary structure, heterooligomer composed of large and small subunits.

It localises to the cytoplasm. It catalyses the reaction Exonucleolytic cleavage in either 5'- to 3'- or 3'- to 5'-direction to yield nucleoside 5'-phosphates.. Bidirectionally degrades single-stranded DNA into large acid-insoluble oligonucleotides, which are then degraded further into small acid-soluble oligonucleotides. The polypeptide is Exodeoxyribonuclease 7 small subunit (Helicobacter pylori (strain G27)).